Consider the following 393-residue polypeptide: Ferrochelatase, mitochondrial (393 aa).

Residues 1 to 31 constitute a mitochondrion transit peptide; it reads MLSRTIRTQGSFLRRSQLTITRSFSVTFNMQ. Residue Asp-351 is part of the active site.

This sequence belongs to the ferrochelatase family. In terms of processing, the leader peptide may be processed in two proteolytic steps, first between Ser-23 and Phe-24, second and by a different protease, to yield the mature protein.

It localises to the mitochondrion inner membrane. The catalysed reaction is heme b + 2 H(+) = protoporphyrin IX + Fe(2+). It participates in porphyrin-containing compound metabolism; protoheme biosynthesis; protoheme from protoporphyrin-IX: step 1/1. Functionally, catalyzes the ferrous insertion into protoporphyrin IX. The protein is Ferrochelatase, mitochondrial (HEM15) of Saccharomyces cerevisiae (strain ATCC 204508 / S288c) (Baker's yeast).